The chain runs to 851 residues: Beta-galactosidase BoGH2A (851 aa).

The signal sequence occupies residues 1 to 19 (MMIGKLKYLMLGGCLILGS). C20 carries the N-palmitoyl cysteine lipid modification. A lipid anchor (S-diacylglycerol cysteine) is attached at C20. Residue E437 is the Proton donor of the active site. The active-site Nucleophile is the E544.

The protein belongs to the glycosyl hydrolase 2 family.

Its subcellular location is the cell inner membrane. It carries out the reaction Hydrolysis of terminal non-reducing beta-D-galactose residues in beta-D-galactosides.. The protein operates within glucan metabolism; xyloglucan degradation. In terms of biological role, catalyzes the hydrolysis of terminal non-reducing beta-D-galactose residues in beta-D-galactosides in xyloglucan degradation, converting 'L' units to 'X' units. The protein is Beta-galactosidase BoGH2A of Bacteroides ovatus (strain ATCC 8483 / DSM 1896 / JCM 5824 / BCRC 10623 / CCUG 4943 / NCTC 11153).